The following is a 202-amino-acid chain: MRGILRMTVLAAAVFGVAGNALAEDWKLAKDEDGVKVYLSSVQGSKYKAYRGVTDIKADVATIEALQEDVKGSCKWIHACAEMKLLKQEGADAWTYSKIDMPWPVTGRDVVIHVTTEKTADGTVIRHLKADPTYIPEEKGQIRVPKLVGEWKLQPKGQGVTEVTYQVETEPGGSIPSWLANSFVVDAPLNTLKGLRSAAEKR.

Residues 1–202 enclose the START domain; sequence MRGILRMTVL…KGLRSAAEKR (202 aa).

Functionally, may play a role in the interaction of the bacterium with animal cells. This is an uncharacterized protein from Pseudomonas aeruginosa (strain ATCC 15692 / DSM 22644 / CIP 104116 / JCM 14847 / LMG 12228 / 1C / PRS 101 / PAO1).